The chain runs to 135 residues: uncharacterized protein (135 aa).

This is an uncharacterized protein from Mycoplasma pneumoniae (strain ATCC 29342 / M129 / Subtype 1) (Mycoplasmoides pneumoniae).